Reading from the N-terminus, the 124-residue chain is MKFAVAIAFTLLVCVFAQEEEEPVTCGGKQCKPNSCCVQNSHGKGKDSPRCHPLGKLNNPCEVEPNENGIYSQHCPCGEGLSCTKVGEPNKLRCQEESGKSDKSKESQGSDESEESEESKESSG.

Positions 1–17 (MKFAVAIAFTLLVCVFA) are cleaved as a signal peptide. 5 cysteine pairs are disulfide-bonded: C26–C37, C31–C51, C36–C75, C61–C83, and C77–C94. Residues 93 to 108 (RCQEESGKSDKSKESQ) show a composition bias toward basic and acidic residues. The tract at residues 93 to 124 (RCQEESGKSDKSKESQGSDESEESEESKESSG) is disordered. Residues 109-118 (GSDESEESEE) are compositionally biased toward acidic residues.

This sequence belongs to the neurotoxin 32 family. Expressed by the venom gland.

The protein resides in the secreted. The sequence is that of U33-theraphotoxin-Cg1c from Chilobrachys guangxiensis (Chinese earth tiger tarantula).